The sequence spans 77 residues: Adipokinetic prohormone type 3 (77 aa).

Residues 1–22 form the signal peptide; sequence MQVRAVLVLAVVALVAVATSRA. Position 23 is a pyrrolidone carboxylic acid (Gln23). Tryptophan amide is present on Trp30.

The protein belongs to the AKH/HRTH/RPCH family.

The protein localises to the secreted. In terms of biological role, this hormone, released from cells in the corpora cardiaca, causes release of diglycerides from the fat body and stimulation of muscles to use these diglycerides as an energy source during energy-demanding processes. The sequence is that of Adipokinetic prohormone type 3 from Locusta migratoria (Migratory locust).